The following is a 243-amino-acid chain: PF03932 family protein CutC (243 aa).

This sequence belongs to the CutC family.

Its subcellular location is the cytoplasm. This is PF03932 family protein CutC from Glaesserella parasuis serovar 5 (strain SH0165) (Haemophilus parasuis).